The following is a 457-amino-acid chain: tRNA modification GTPase MnmE (457 aa).

3 residues coordinate (6S)-5-formyl-5,6,7,8-tetrahydrofolate: R22, E83, and R122. Residues 219–378 (GLATAIIGRP…LEEAIKALFF (160 aa)) enclose the TrmE-type G domain. N229 is a binding site for K(+). GTP contacts are provided by residues 229–234 (NVGKSS), 248–254 (TDIAGTT), and 273–276 (DTAG). S233 is a Mg(2+) binding site. K(+)-binding residues include T248, I250, and T253. T254 lines the Mg(2+) pocket. (6S)-5-formyl-5,6,7,8-tetrahydrofolate is bound at residue K457.

This sequence belongs to the TRAFAC class TrmE-Era-EngA-EngB-Septin-like GTPase superfamily. TrmE GTPase family. Homodimer. Heterotetramer of two MnmE and two MnmG subunits. K(+) is required as a cofactor.

The protein localises to the cytoplasm. Exhibits a very high intrinsic GTPase hydrolysis rate. Involved in the addition of a carboxymethylaminomethyl (cmnm) group at the wobble position (U34) of certain tRNAs, forming tRNA-cmnm(5)s(2)U34. This Listeria innocua serovar 6a (strain ATCC BAA-680 / CLIP 11262) protein is tRNA modification GTPase MnmE.